A 204-amino-acid chain; its full sequence is ATP phosphoribosyltransferase (204 aa).

This sequence belongs to the ATP phosphoribosyltransferase family. Short subfamily. In terms of assembly, heteromultimer composed of HisG and HisZ subunits.

It is found in the cytoplasm. It carries out the reaction 1-(5-phospho-beta-D-ribosyl)-ATP + diphosphate = 5-phospho-alpha-D-ribose 1-diphosphate + ATP. It functions in the pathway amino-acid biosynthesis; L-histidine biosynthesis; L-histidine from 5-phospho-alpha-D-ribose 1-diphosphate: step 1/9. Its function is as follows. Catalyzes the condensation of ATP and 5-phosphoribose 1-diphosphate to form N'-(5'-phosphoribosyl)-ATP (PR-ATP). Has a crucial role in the pathway because the rate of histidine biosynthesis seems to be controlled primarily by regulation of HisG enzymatic activity. The sequence is that of ATP phosphoribosyltransferase from Staphylococcus epidermidis (strain ATCC 35984 / DSM 28319 / BCRC 17069 / CCUG 31568 / BM 3577 / RP62A).